The chain runs to 381 residues: G-protein coupled receptor homolog Q2/3L (381 aa).

Topologically, residues 1–91 (MNYTLSTVSS…HCDDGVDTTS (91 aa)) are extracellular. Residues Asn2, Asn15, Asn19, Asn41, Asn50, Asn56, and Asn62 are each glycosylated (N-linked (GlcNAc...) asparagine; by host). Residues 92 to 112 (FGLITLYSTIFFLGLFGNIIV) form a helical membrane-spanning segment. Topologically, residues 113 to 126 (LTVLRKYKIKTIQD) are cytoplasmic. A helical membrane pass occupies residues 127–147 (MFLLNLTLSDLIFVLVFPFNL). At 148–165 (YDSIAKQWSLGDCLCKFK) the chain is on the extracellular side. The chain crosses the membrane as a helical span at residues 166–186 (AMFYFVGFYNSMSFITLMSID). The Cytoplasmic portion of the chain corresponds to 187–206 (RYLAVVHPVKSMPIRTKRYG). The helical transmembrane segment at 207 to 227 (IVLSMVVWIVSTIESFPIMLF) threads the bilayer. The Extracellular segment spans residues 228–251 (YETKKVYGITYCHVFYNDNAKIWK). A helical transmembrane segment spans residues 252–272 (LFINFEINIFGMIIPLTILLY). The Cytoplasmic segment spans residues 273-294 (CYYKILNTLKTSQTKNKKAIKM). Residues 295 to 315 (VFLIVICSVLFLLPFSVTVFV) traverse the membrane as a helical segment. The Extracellular segment spans residues 316-336 (SSLYLLNVFSGCMALRFVNLA). A helical transmembrane segment spans residues 337 to 357 (VHVAEIVSLCHCFINPLIYAF). The Cytoplasmic portion of the chain corresponds to 358–381 (CSREFTKKLLRLRTTSSAGSISIG).

This sequence belongs to the G-protein coupled receptor 1 family.

Its subcellular location is the host cell membrane. In terms of biological role, putative chemokine receptor. This Ovis aries (Sheep) protein is G-protein coupled receptor homolog Q2/3L.